Consider the following 411-residue polypeptide: Protein DDI1 homolog 2 (411 aa).

One can recognise a Ubiquitin-like domain in the interval 1 to 81 (MLLTVFCAPR…LVLRQAERLR (81 aa)). The interval 82–144 (APPQPTVPGL…SGVSPQGLDN (63 aa)) is disordered. A compositionally biased stretch (low complexity) spans 108–121 (QNRNRPQQAQRPST). Asp262 is an active-site residue. A Ubiquitin-binding motif is present at residues 387–406 (DEIADRELAEAIQRSVQDSG).

It belongs to the DDI1 family. Homodimer.

It is found in the cytoplasm. Its subcellular location is the cytosol. The protein localises to the chromosome. Aspartic protease that mediates the cleavage of NFE2L1/NRF1 at 'Leu-104', thereby promoting release of NFE2L1/NRF1 from the endoplasmic reticulum membrane. Ubiquitination of NFE2L1/NRF1 is a prerequisite for cleavage, suggesting that DDI2 specifically recognizes and binds ubiquitinated NFE2L1/NRF1. Seems to act as a proteasomal shuttle which links the proteasome and replication fork proteins like RTF2. Required for cellular survival following replication stress. The protein is Protein DDI1 homolog 2 (ddi2) of Danio rerio (Zebrafish).